A 325-amino-acid polypeptide reads, in one-letter code: MNLNKHSERKFDLITVGRACIDLNAVEYNRPMEETMTFSKYVGGSPANIAIGTAKLGLKVGFIGKISADQHGRFIEKYMRDLSINTDGMVKDTEGRKVGLAFTEIKSPDECSILMYRENVADLYLTPEEISEDYIKEARVLLISGTALAQSPSREAVLKAVSLARKNDVAVAFELDYRPYTWTNTEETAVYYSLVAEQADVIIGTRDEFDMMENQVGGKNEATKAHLFQHQAEIVVIKHGVEGSFAYTKAGETFQAKAYKTKVLKTFGAGDSYASAFLYGLFSGESIETALKYGSAAASIVVSKHSSSDAMPTADEIKALIAQAE.

The protein belongs to the carbohydrate kinase PfkB family.

It carries out the reaction 5-dehydro-2-deoxy-D-gluconate + ATP = 6-phospho-5-dehydro-2-deoxy-D-gluconate + ADP + H(+). It participates in polyol metabolism; myo-inositol degradation into acetyl-CoA; acetyl-CoA from myo-inositol: step 5/7. Catalyzes the phosphorylation of 5-dehydro-2-deoxy-D-gluconate (2-deoxy-5-keto-D-gluconate or DKG) to 6-phospho-5-dehydro-2-deoxy-D-gluconate (DKGP). This Listeria monocytogenes serotype 4b (strain CLIP80459) protein is 5-dehydro-2-deoxygluconokinase.